Consider the following 587-residue polypeptide: Aspartate--tRNA ligase (587 aa).

Glutamate 174 is an L-aspartate binding site. Positions 198-201 are aspartate; the sequence is QITK. Arginine 220 is an L-aspartate binding site. ATP is bound by residues 220–222 and glutamine 229; that span reads RDE. Residue histidine 443 coordinates L-aspartate. Residue glutamate 477 participates in ATP binding. Residue arginine 484 coordinates L-aspartate. 529 to 532 is an ATP binding site; it reads GLDR.

This sequence belongs to the class-II aminoacyl-tRNA synthetase family. Type 1 subfamily. Homodimer.

It localises to the cytoplasm. It catalyses the reaction tRNA(Asp) + L-aspartate + ATP = L-aspartyl-tRNA(Asp) + AMP + diphosphate. Its function is as follows. Catalyzes the attachment of L-aspartate to tRNA(Asp) in a two-step reaction: L-aspartate is first activated by ATP to form Asp-AMP and then transferred to the acceptor end of tRNA(Asp). The chain is Aspartate--tRNA ligase from Streptococcus pneumoniae (strain ATCC 700669 / Spain 23F-1).